The sequence spans 475 residues: Chromosomal replication initiator protein DnaA (475 aa).

A domain I, interacts with DnaA modulators region spans residues 1-71; it reads MTNDTWNEVR…RQLSAHGAGA (71 aa). Positions 71 to 133 are domain II; sequence ADRVKFTVSP…PAQPRELPGA (63 aa). Residues 107-127 show a composition bias toward low complexity; the sequence is APAPVHHTAPAPAPVAAPAQP. Positions 107 to 129 are disordered; it reads APAPVHHTAPAPAPVAAPAQPRE. Positions 134-355 are domain III, AAA+ region; the sequence is KLNPNFTFAN…GALTRLFAFA (222 aa). The ATP site is built by Gly178, Gly180, Lys181, and Thr182. Residues 356–475 are domain IV, binds dsDNA; the sequence is DLVRREVTVD…AELLRRTLEA (120 aa).

Belongs to the DnaA family. In terms of assembly, oligomerizes as a right-handed, spiral filament on DNA at oriC.

Its subcellular location is the cytoplasm. Plays an essential role in the initiation and regulation of chromosomal replication. ATP-DnaA binds to the origin of replication (oriC) to initiate formation of the DNA replication initiation complex once per cell cycle. Binds the DnaA box (a 9 base pair repeat at the origin) and separates the double-stranded (ds)DNA. Forms a right-handed helical filament on oriC DNA; dsDNA binds to the exterior of the filament while single-stranded (ss)DNA is stabiized in the filament's interior. The ATP-DnaA-oriC complex binds and stabilizes one strand of the AT-rich DNA unwinding element (DUE), permitting loading of DNA polymerase. After initiation quickly degrades to an ADP-DnaA complex that is not apt for DNA replication. Binds acidic phospholipids. This is Chromosomal replication initiator protein DnaA from Jannaschia sp. (strain CCS1).